The primary structure comprises 540 residues: Serine/threonine-protein phosphatase ppzA (540 aa).

Disordered stretches follow at residues 1–108 and 120–140; these read MGQS…KRGH and VDHV…STQK. Composition is skewed to polar residues over residues 15 to 24 and 45 to 54; these read SLQSYPSFSR and SDSPRGSTAG. Positions 62 to 88 are enriched in low complexity; the sequence is AASVKSTTSRRSSTNQSVQSPDDTPSQ. Over residues 89 to 98 the composition is skewed to pro residues; the sequence is PDAPEPPPSP. Over residues 127–136 the composition is skewed to low complexity; that stretch reads PPTGAAPTGP. Positions 239, 241, 267, and 299 each coordinate Mn(2+). Residues 258 to 540 enclose the Phosphatase tensin-type domain; the sequence is PASNYLFLGD…SLVTSWGISR (283 aa). His300 acts as the Proton donor in catalysis. Residues His348 and His423 each contribute to the Mn(2+) site.

Belongs to the PPP phosphatase family. PP-Z subfamily. As to quaternary structure, interacts with at least 54 proteins, of which 31 are detected only after iron starvation and 22 are detected only in control conditions. Only the regulatory subunit of the protein phosphatase PP1 (Afu1g04800/AFUB_005140) interacts with ppzA in both conditions. The cofactor is Mn(2+).

It is found in the cytoplasm. It catalyses the reaction O-phospho-L-seryl-[protein] + H2O = L-seryl-[protein] + phosphate. The catalysed reaction is O-phospho-L-threonyl-[protein] + H2O = L-threonyl-[protein] + phosphate. Catalytic subunit of protein phosphatase Z (PPZ) involved in iron assimilation. Regulates secondary metabolites production, including gliotoxin, pyripyropene A, fumagillin, fumiquinazoline A, triacetyl-fusarinine C, and helvolic acid. Plays a key role in pathogenicity. The polypeptide is Serine/threonine-protein phosphatase ppzA (Aspergillus fumigatus (strain CBS 144.89 / FGSC A1163 / CEA10) (Neosartorya fumigata)).